We begin with the raw amino-acid sequence, 303 residues long: MTEIVADKTVEVVKNAIETADGALDLYNKYLDQVIPWQTFDETIKELSRFKQEYSQAASVLVGNIKTLLMDSQDKYFEATQTVYEWCGVATQLLAAYILLFDEYNEKKASAQKDILIKVLDDGITKLNEAQKSLLVSSQSFNNASGKLLALDSQLTNDFSEKSSYFQSQVDKIRKEAYAGAAAGVVAGPFGLIISYSIAAGVVEGKLIPELKNKLKSVQSFFTTLSNTVKQANKDIDAAKLKLTTEIAAIGEIKTETETTRFYVDYDDLMLSLLKEAANKMINTCNEYQKRHGKKTLFEVPEV.

Cys87 and Cys285 are joined by a disulfide. The helical transmembrane segment at Ala183–Val203 threads the bilayer.

Belongs to the hemolysin E family. In terms of assembly, monomer and oligomer. In periplasm, it is present as a monomer, while in outer membrane vesicles, it oligomerizes to form a pore structure that is active. The pore is formed by a dodecamer. Post-translationally, in periplasm, it forms a disulfide bond, which prevents the oligomerization. In outer membrane vesicles, the redox status prevents formation of the disulfide bond, leading to oligomerization and pore formation.

The protein localises to the secreted. Its subcellular location is the periplasm. It is found in the host cell membrane. Functionally, toxin, which has some hemolytic activity towards mammalian cells. Acts by forming a pore-like structure upon contact with mammalian cells. The chain is Hemolysin E (hlyE) from Escherichia coli O157:H7.